We begin with the raw amino-acid sequence, 391 residues long: Elongation factor Tu 2 (391 aa).

The region spanning lysine 10–glutamate 201 is the tr-type G domain. Residues glycine 19–threonine 26 are G1. Glycine 19–threonine 26 lines the GTP pocket. A Mg(2+)-binding site is contributed by threonine 26. A G2 region spans residues glycine 55–serine 59. The tract at residues aspartate 76–glycine 79 is G3. GTP is bound by residues aspartate 76–histidine 80 and asparagine 131–aspartate 134. Positions asparagine 131–aspartate 134 are G4. The tract at residues serine 169–leucine 171 is G5.

It belongs to the TRAFAC class translation factor GTPase superfamily. Classic translation factor GTPase family. EF-Tu/EF-1A subfamily. Monomer.

It is found in the cytoplasm. The catalysed reaction is GTP + H2O = GDP + phosphate + H(+). Functionally, GTP hydrolase that promotes the GTP-dependent binding of aminoacyl-tRNA to the A-site of ribosomes during protein biosynthesis. The protein is Elongation factor Tu 2 of Bartonella bacilliformis (strain ATCC 35685 / KC583 / Herrer 020/F12,63).